Here is a 410-residue protein sequence, read N- to C-terminus: Dipeptidase 1 (410 aa).

Positions 1 to 16 (MVIIWWFWSLLAICAS) are cleaved as a signal peptide. Zn(2+) is bound by residues histidine 36 and aspartate 38. An intrachain disulfide couples cysteine 87 to cysteine 170. Asparagine 121 carries N-linked (GlcNAc...) asparagine glycosylation. Zn(2+) is bound at residue glutamate 141. Histidine 168 is a binding site for substrate. Zn(2+) is bound by residues histidine 214 and histidine 235. A disulfide bridge connects residues cysteine 242 and cysteine 274. Arginine 246 contributes to the substrate binding site. The N-linked (GlcNAc...) asparagine glycan is linked to asparagine 258. Aspartate 304 is a binding site for substrate. N-linked (GlcNAc...) asparagine glycosylation is present at asparagine 332. Residue serine 384 is the site of GPI-anchor amidated serine attachment. Positions 385–410 (QAHSIHLQTGALVASLASLLFRLHLL) are cleaved as a propeptide — removed in mature form.

It belongs to the metallo-dependent hydrolases superfamily. Peptidase M19 family. Homodimer; disulfide-linked. Requires Zn(2+) as cofactor. As to expression, expressed in heart, lung, skeletal muscle, kidney, liver, and testis. Not detected in brain and spleen.

Its subcellular location is the apical cell membrane. The protein localises to the cell projection. The protein resides in the microvillus membrane. The catalysed reaction is an L-aminoacyl-L-amino acid + H2O = 2 an L-alpha-amino acid. It catalyses the reaction leukotriene D4 + H2O = leukotriene E4 + glycine. It carries out the reaction L-cystine-bis-glycine + 2 H2O = L-cystine + 2 glycine. The enzyme catalyses a beta-lactam + H2O = a substituted beta-amino acid. The catalysed reaction is glycyldehydrophenylalanine + H2O = 2,3-didehydrophenylalanine + glycine. With respect to regulation, inhibited by L-penicillamine. Inhibited by cilastatin. In terms of biological role, hydrolyzes a wide range of dipeptides including the conversion of leukotriene D4 to leukotriene E4. Hydrolyzes cystinyl-bis-glycine (cys-bis-gly) formed during glutathione degradation. Also possesses beta lactamase activity and hydrolytically inactivates beta-lactam antibiotics. Independently of its dipeptidase activity, acts as an adhesion receptor for neutrophil recruitment from bloodstream into inflamed lungs and liver. This chain is Dipeptidase 1 (Dpep1), found in Mus musculus (Mouse).